Reading from the N-terminus, the 249-residue chain is MLVIPAIDLKDGQCVRLKQGRMDDSTTYGDDPVAMAARWVETGARRLHLVDLNGAFEGKPVNAEAVTAIARAYPDLPIQIGGGIRTAETIEAYLEAGVSYVIIGTQAVKEPAFVGEMCRRFPGHVIVGLDARDGYVATDGWAEVSTLKAVDLAKRFADDGVSSIVYTDIARDGMMQGVNIAATAELAREGGLPVIASGGVTHLGDIEALLEVADAGILGAITGRAIYEGKLDVAEAQRLCDAQLATRRS.

The active-site Proton acceptor is Asp-8. Asp-130 acts as the Proton donor in catalysis.

The protein belongs to the HisA/HisF family.

It is found in the cytoplasm. It carries out the reaction 1-(5-phospho-beta-D-ribosyl)-5-[(5-phospho-beta-D-ribosylamino)methylideneamino]imidazole-4-carboxamide = 5-[(5-phospho-1-deoxy-D-ribulos-1-ylimino)methylamino]-1-(5-phospho-beta-D-ribosyl)imidazole-4-carboxamide. It participates in amino-acid biosynthesis; L-histidine biosynthesis; L-histidine from 5-phospho-alpha-D-ribose 1-diphosphate: step 4/9. The protein is 1-(5-phosphoribosyl)-5-[(5-phosphoribosylamino)methylideneamino] imidazole-4-carboxamide isomerase of Chromohalobacter salexigens (strain ATCC BAA-138 / DSM 3043 / CIP 106854 / NCIMB 13768 / 1H11).